The chain runs to 72 residues: Translation initiation factor IF-1 (72 aa).

The 72-residue stretch at 1–72 (MAKEDCIEME…TKGRIKFRSK (72 aa)) folds into the S1-like domain.

It belongs to the IF-1 family. As to quaternary structure, component of the 30S ribosomal translation pre-initiation complex which assembles on the 30S ribosome in the order IF-2 and IF-3, IF-1 and N-formylmethionyl-tRNA(fMet); mRNA recruitment can occur at any time during PIC assembly.

It localises to the cytoplasm. One of the essential components for the initiation of protein synthesis. Stabilizes the binding of IF-2 and IF-3 on the 30S subunit to which N-formylmethionyl-tRNA(fMet) subsequently binds. Helps modulate mRNA selection, yielding the 30S pre-initiation complex (PIC). Upon addition of the 50S ribosomal subunit IF-1, IF-2 and IF-3 are released leaving the mature 70S translation initiation complex. This chain is Translation initiation factor IF-1, found in Francisella tularensis subsp. novicida (strain U112).